A 134-amino-acid polypeptide reads, in one-letter code: Small ribosomal subunit protein uS8 (134 aa).

The protein belongs to the universal ribosomal protein uS8 family. As to quaternary structure, part of the 30S ribosomal subunit. Contacts proteins S5 and S12.

One of the primary rRNA binding proteins, it binds directly to 16S rRNA central domain where it helps coordinate assembly of the platform of the 30S subunit. This is Small ribosomal subunit protein uS8 from Sphingopyxis alaskensis (strain DSM 13593 / LMG 18877 / RB2256) (Sphingomonas alaskensis).